Consider the following 193-residue polypeptide: Cilia- and flagella-associated protein 20 (193 aa).

Belongs to the CFAP20 family. Microtubule inner protein component of sperm flagellar doublet microtubules.

It localises to the nucleus. It is found in the cytoplasm. Its subcellular location is the cytoskeleton. The protein localises to the microtubule organizing center. The protein resides in the centrosome. It localises to the centriole. It is found in the cilium basal body. Its subcellular location is the cilium axoneme. The protein localises to the flagellum axoneme. Its function is as follows. Cilium- and flagellum-specific protein that plays a role in axonemal structure organization and motility. Microtubule inner protein (MIP) part of the dynein-decorated doublet microtubules (DMTs) in cilia axoneme, which is required for motile cilia beating. Involved in the regulation of the size and morphology of cilia. Required for axonemal microtubules polyglutamylation. This is Cilia- and flagella-associated protein 20 from Homo sapiens (Human).